A 435-amino-acid chain; its full sequence is GTPase Der (435 aa).

EngA-type G domains lie at 4–167 (PVVA…PAEK) and 175–350 (ISFS…DNQN). Residues 10 to 17 (GQPNVGKS), 57 to 61 (DTGGI), 119 to 122 (NKAD), 181 to 188 (GRPNVGKS), 228 to 232 (DTAGI), and 293 to 296 (NKWD) contribute to the GTP site. The KH-like domain occupies 351 to 435 (QRIQSSVLND…PIKILPRKRK (85 aa)).

Belongs to the TRAFAC class TrmE-Era-EngA-EngB-Septin-like GTPase superfamily. EngA (Der) GTPase family. In terms of assembly, associates with the 50S ribosomal subunit.

Functionally, GTPase that plays an essential role in the late steps of ribosome biogenesis. This chain is GTPase Der, found in Lactobacillus acidophilus (strain ATCC 700396 / NCK56 / N2 / NCFM).